Reading from the N-terminus, the 1855-residue chain is Chitin synthase 5 (1855 aa).

The Myosin motor domain occupies methionine 1–aspartate 778. Residue glycine 95–threonine 102 participates in ATP binding. 3 N-linked (GlcNAc...) asparagine glycosylation sites follow: asparagine 221, asparagine 520, and asparagine 558. Residues alanine 585–alanine 650 form a disordered region. The tract at residues leucine 658–aspartate 682 is actin-binding. An N-linked (GlcNAc...) asparagine glycan is attached at asparagine 662. 2 helical membrane passes run tryptophan 887–glycine 907 and valine 922–phenylalanine 942. In terms of domain architecture, Cytochrome b5 heme-binding spans glutamine 950–phenylalanine 1008. Asparagine 1037 and asparagine 1061 each carry an N-linked (GlcNAc...) asparagine glycan. The chain crosses the membrane as a helical span at residues isoleucine 1199–leucine 1219. N-linked (GlcNAc...) asparagine glycans are attached at residues asparagine 1422, asparagine 1456, and asparagine 1562. Transmembrane regions (helical) follow at residues phenylalanine 1587–valine 1607, alanine 1621–valine 1641, and tryptophan 1650–phenylalanine 1670. 2 N-linked (GlcNAc...) asparagine glycosylation sites follow: asparagine 1755 and asparagine 1767. The DEK-C domain maps to methionine 1797–serine 1852.

This sequence in the N-terminal section; belongs to the TRAFAC class myosin-kinesin ATPase superfamily. Myosin family. The protein in the C-terminal section; belongs to the chitin synthase family. Class V subfamily.

It localises to the apical cell membrane. Its subcellular location is the cell septum. It is found in the cell tip. The catalysed reaction is [(1-&gt;4)-N-acetyl-beta-D-glucosaminyl](n) + UDP-N-acetyl-alpha-D-glucosamine = [(1-&gt;4)-N-acetyl-beta-D-glucosaminyl](n+1) + UDP + H(+). Its function is as follows. Polymerizes chitin, a structural polymer of the cell wall and septum, by transferring the sugar moiety of UDP-GlcNAc to the non-reducing end of the growing chitin polymer. The sequence is that of Chitin synthase 5 from Zymoseptoria tritici (strain CBS 115943 / IPO323) (Speckled leaf blotch fungus).